Reading from the N-terminus, the 420-residue chain is Senescence-associated protein SPA15, chloroplastic (420 aa).

The N-terminal 68 residues, 1–68 (MAKPNGIIYS…YIATRGSSLR (68 aa)), are a transit peptide targeting the chloroplast. Positions 85 to 111 (EYRDSSDTSSMQGKDKDPASLGKSGTP) are disordered.

This sequence belongs to the ATA15/OSA15 family. Expressed in leaves.

Its subcellular location is the plastid. The protein localises to the chloroplast. Its function is as follows. May be involved in the regulation of leaf senescence. This chain is Senescence-associated protein SPA15, chloroplastic, found in Ipomoea batatas (Sweet potato).